The sequence spans 217 residues: Homologous-pairing protein 2 homolog (217 aa).

Positions I93–H153 form a coiled coil. A DNA-binding region spans residues S118–E182.

Belongs to the HOP2 family. In terms of assembly, interacts with the DNA-binding domain of the nuclear receptors NR3C1/GR, ESR2/ER-beta, THRB and RXRA. Forms a stable heterodimer with MND1. Interacts with PSMC3/TBP1. In terms of processing, PTM: Phosphorylated by PKA, PKC and MAPK. In terms of tissue distribution, highly expressed in testis and colon.

It localises to the nucleus. Functionally, plays an important role in meiotic recombination. Stimulates DMC1-mediated strand exchange required for pairing homologous chromosomes during meiosis. The complex PSMC3IP/MND1 binds DNA, stimulates the recombinase activity of DMC1 as well as DMC1 D-loop formation from double-strand DNA. This complex stabilizes presynaptic RAD51 and DMC1 filaments formed on single strand DNA to capture double-strand DNA. This complex stimulates both synaptic and presynaptic critical steps in RAD51 and DMC1-promoted homologous pairing. May inhibit HIV-1 viral protein TAT activity and modulate the activity of proteasomes through association with PSMC3. Acts as a tissue specific coactivator of hormone-dependent transcription mediated by nuclear receptors. The protein is Homologous-pairing protein 2 homolog (PSMC3IP) of Homo sapiens (Human).